A 364-amino-acid chain; its full sequence is tRNA-specific 2-thiouridylase MnmA 1 (364 aa).

Residues 11–18 (GMSGGTDS) and Phe37 contribute to the ATP site. Residue Cys96 is the Nucleophile of the active site. Cys96 and Cys193 form a disulfide bridge. Position 120 (Gly120) interacts with ATP. The tract at residues 142–144 (KDQ) is interaction with tRNA. The Cysteine persulfide intermediate role is filled by Cys193. Positions 309–310 (RY) are interaction with tRNA.

This sequence belongs to the MnmA/TRMU family.

The protein localises to the cytoplasm. It carries out the reaction S-sulfanyl-L-cysteinyl-[protein] + uridine(34) in tRNA + AH2 + ATP = 2-thiouridine(34) in tRNA + L-cysteinyl-[protein] + A + AMP + diphosphate + H(+). Functionally, catalyzes the 2-thiolation of uridine at the wobble position (U34) of tRNA, leading to the formation of s(2)U34. In Bacteroides fragilis (strain YCH46), this protein is tRNA-specific 2-thiouridylase MnmA 1.